A 317-amino-acid chain; its full sequence is tRNA(Met) cytidine acetate ligase (317 aa).

ATP contacts are provided by residues 6 to 19 (IAEY…HIYQ), G100, N157, and R182.

This sequence belongs to the TmcAL family.

The protein localises to the cytoplasm. The catalysed reaction is cytidine(34) in elongator tRNA(Met) + acetate + ATP = N(4)-acetylcytidine(34) in elongator tRNA(Met) + AMP + diphosphate. Its function is as follows. Catalyzes the formation of N(4)-acetylcytidine (ac(4)C) at the wobble position of elongator tRNA(Met), using acetate and ATP as substrates. First activates an acetate ion to form acetyladenylate (Ac-AMP) and then transfers the acetyl group to tRNA to form ac(4)C34. The polypeptide is tRNA(Met) cytidine acetate ligase (Mesomycoplasma hyopneumoniae (strain J / ATCC 25934 / NCTC 10110) (Mycoplasma hyopneumoniae)).